The chain runs to 505 residues: MEEFQGHIELDRSWQDNFFYPLIFQEYIYAFAYDHGLNKSILLENAGDKKYSLLIVKRLITRMYQQNHLILSANDSNQNEFFGHKHKKNLYSQMISEGFAVIVEIPFSLLLISSLEGKEIVKSPNLRSIHSIFPFFEDKFLHLNYVLDILIPYPAHLEILVQTLRYWVKDASSLHLLRFFLYEYRNWNSLSIPKESIYIFSKRNQRLFLFLYNFHVCEYESIFVFLRNQSSHLRSTSFGALLERIHFYGKLEYLVNVFTKDFGVILWLFKEPFPHYVRYQGKSILASKGTSLLMHKWKYYLIHFWQCHFSVWSQPRRIYINRLSNHSLDFMGFFSSVRLNSSVVRSQMLENSFLIDNTIMKFDTIIPIIPLIGSLAKAKFCNVLGHPISKSVWTDLSDSDIIDRFGRICKNLSHYYSGSSRKKSLYRIKYILRLSCARTLARKHKSTVRAFLKRLGSEFLEEFFTEEEKVLSLILPRDSFTSRELYRGRFWYFDIICIHNLANDE.

Belongs to the intron maturase 2 family. MatK subfamily.

The protein resides in the plastid. It localises to the chloroplast. In terms of biological role, usually encoded in the trnK tRNA gene intron. Probably assists in splicing its own and other chloroplast group II introns. In Phaulothamnus spinescens (Snake-eyes), this protein is Maturase K.